A 313-amino-acid chain; its full sequence is MSPGSKRHISGVLLLDKASGLSSNQALQTAKRIFSAHKAGHTGTLDPMATGLLPICFGEATKFSSALLGADKTYEAVLRLGYMSTTGDAEGEISIAAGMESQYVDLTREKIEAVRKSFIGVITQVPPMYSAIKHRGKPMYTFARAGVEIERQPRAITIHDLSIEAYQGNEMRIRVTCGSGTYIRTLAEDLGHALGCGGAYLTALRRSALGGFDLPQAYTLTGLEAMPPSQRDSCLLPADSLLRSLPPVVVDSAAALSLLQGRAIPGTHPAGESLLPGRQVRLYDKAQRFLGLGEISTEGYISPKRLIRFEQSL.

D46 serves as the catalytic Nucleophile.

This sequence belongs to the pseudouridine synthase TruB family. Type 1 subfamily.

The catalysed reaction is uridine(55) in tRNA = pseudouridine(55) in tRNA. Its function is as follows. Responsible for synthesis of pseudouridine from uracil-55 in the psi GC loop of transfer RNAs. The polypeptide is tRNA pseudouridine synthase B (Nitrosospira multiformis (strain ATCC 25196 / NCIMB 11849 / C 71)).